We begin with the raw amino-acid sequence, 511 residues long: Trigger factor (511 aa).

The 86-residue stretch at 168-253 (GDLLTIDFVG…VKEVKAPAEV (86 aa)) folds into the PPIase FKBP-type domain. The tract at residues 446–511 (DEHEHHHHDH…KAPAKKKKED (66 aa)) is disordered. Over residues 455-478 (HDHDHDHDHDHDHGHDHDHGDEKP) the composition is skewed to basic and acidic residues. A compositionally biased stretch (basic residues) spans 479 to 488 (KKKPAAKKAA). Positions 489 to 498 (AKSDDGEAKP) are enriched in basic and acidic residues. The span at 499–511 (AAKKAPAKKKKED) shows a compositional bias: basic residues.

It belongs to the FKBP-type PPIase family. Tig subfamily.

It localises to the cytoplasm. It catalyses the reaction [protein]-peptidylproline (omega=180) = [protein]-peptidylproline (omega=0). Functionally, involved in protein export. Acts as a chaperone by maintaining the newly synthesized protein in an open conformation. Functions as a peptidyl-prolyl cis-trans isomerase. The chain is Trigger factor from Parvibaculum lavamentivorans (strain DS-1 / DSM 13023 / NCIMB 13966).